The sequence spans 63 residues: ATP synthase F(0) complex subunit 8 (63 aa).

Residues 8–24 (TWLLTILSMLLTLFVLF) traverse the membrane as a helical segment. The residue at position 57 (lysine 57) is an N6-acetyllysine.

Belongs to the ATPase protein 8 family. As to quaternary structure, component of the ATP synthase complex composed at least of ATP5F1A/subunit alpha, ATP5F1B/subunit beta, ATP5MC1/subunit c (homooctomer), MT-ATP6/subunit a, MT-ATP8/subunit 8, ATP5ME/subunit e, ATP5MF/subunit f, ATP5MG/subunit g, ATP5MK/subunit k, ATP5MJ/subunit j, ATP5F1C/subunit gamma, ATP5F1D/subunit delta, ATP5F1E/subunit epsilon, ATP5PF/subunit F6, ATP5PB/subunit b, ATP5PD/subunit d, ATP5PO/subunit OSCP. ATP synthase complex consists of a soluble F(1) head domain (subunits alpha(3) and beta(3)) - the catalytic core - and a membrane F(0) domain - the membrane proton channel (subunits c, a, 8, e, f, g, k and j). These two domains are linked by a central stalk (subunits gamma, delta, and epsilon) rotating inside the F1 region and a stationary peripheral stalk (subunits F6, b, d, and OSCP). Interacts with PRICKLE3.

The protein localises to the mitochondrion membrane. Subunit 8, of the mitochondrial membrane ATP synthase complex (F(1)F(0) ATP synthase or Complex V) that produces ATP from ADP in the presence of a proton gradient across the membrane which is generated by electron transport complexes of the respiratory chain. ATP synthase complex consist of a soluble F(1) head domain - the catalytic core - and a membrane F(1) domain - the membrane proton channel. These two domains are linked by a central stalk rotating inside the F(1) region and a stationary peripheral stalk. During catalysis, ATP synthesis in the catalytic domain of F(1) is coupled via a rotary mechanism of the central stalk subunits to proton translocation. In vivo, can only synthesize ATP although its ATP hydrolase activity can be activated artificially in vitro. Part of the complex F(0) domain. The chain is ATP synthase F(0) complex subunit 8 from Balaenoptera musculus (Blue whale).